Consider the following 193-residue polypeptide: ATP-dependent Clp protease proteolytic subunit (193 aa).

Catalysis depends on serine 98, which acts as the Nucleophile. Histidine 123 is a catalytic residue.

Belongs to the peptidase S14 family. As to quaternary structure, fourteen ClpP subunits assemble into 2 heptameric rings which stack back to back to give a disk-like structure with a central cavity, resembling the structure of eukaryotic proteasomes.

The protein localises to the cytoplasm. It catalyses the reaction Hydrolysis of proteins to small peptides in the presence of ATP and magnesium. alpha-casein is the usual test substrate. In the absence of ATP, only oligopeptides shorter than five residues are hydrolyzed (such as succinyl-Leu-Tyr-|-NHMec, and Leu-Tyr-Leu-|-Tyr-Trp, in which cleavage of the -Tyr-|-Leu- and -Tyr-|-Trp bonds also occurs).. Its function is as follows. Cleaves peptides in various proteins in a process that requires ATP hydrolysis. Has a chymotrypsin-like activity. Plays a major role in the degradation of misfolded proteins. ClpXP is involved in the complete degradation of the Site-2 clipped anti-sigma-W factor RsiW. This results in the release of SigW and the transcription activation of the genes under the control of the sigma-W factor. This is ATP-dependent Clp protease proteolytic subunit from Oceanobacillus iheyensis (strain DSM 14371 / CIP 107618 / JCM 11309 / KCTC 3954 / HTE831).